The chain runs to 50 residues: Bacteriocin-like protein SboX (50 aa).

This Bacillus subtilis (strain 168) protein is Bacteriocin-like protein SboX (sboX).